A 403-amino-acid polypeptide reads, in one-letter code: Arginine biosynthesis bifunctional protein ArgJ (403 aa).

The substrate site is built by Thr149, Lys175, Thr186, Glu272, Asn398, and Thr403. The active-site Nucleophile is the Thr186.

This sequence belongs to the ArgJ family. As to quaternary structure, heterotetramer of two alpha and two beta chains.

It is found in the cytoplasm. It carries out the reaction N(2)-acetyl-L-ornithine + L-glutamate = N-acetyl-L-glutamate + L-ornithine. The enzyme catalyses L-glutamate + acetyl-CoA = N-acetyl-L-glutamate + CoA + H(+). Its pathway is amino-acid biosynthesis; L-arginine biosynthesis; L-ornithine and N-acetyl-L-glutamate from L-glutamate and N(2)-acetyl-L-ornithine (cyclic): step 1/1. It functions in the pathway amino-acid biosynthesis; L-arginine biosynthesis; N(2)-acetyl-L-ornithine from L-glutamate: step 1/4. Functionally, catalyzes two activities which are involved in the cyclic version of arginine biosynthesis: the synthesis of N-acetylglutamate from glutamate and acetyl-CoA as the acetyl donor, and of ornithine by transacetylation between N(2)-acetylornithine and glutamate. In Caldanaerobacter subterraneus subsp. tengcongensis (strain DSM 15242 / JCM 11007 / NBRC 100824 / MB4) (Thermoanaerobacter tengcongensis), this protein is Arginine biosynthesis bifunctional protein ArgJ.